Here is a 233-residue protein sequence, read N- to C-terminus: Probable GTP-binding protein EngB (233 aa).

The region spanning 21–228 (GLPEVALVGR…WRWIREHVQD (208 aa)) is the EngB-type G domain. GTP is bound by residues 29-36 (GRSNVGKS) and 56-60 (GRTQA). Mg(2+) is bound by residues Ser-36 and Thr-58. Positions 68–87 (PQGKPRPEGEPQPDKDAGRT) are disordered. Residues 72-85 (PRPEGEPQPDKDAG) show a composition bias toward basic and acidic residues. Residues 107-110 (DMPG), 174-177 (TKAD), and 207-209 (FSA) each bind GTP.

It belongs to the TRAFAC class TrmE-Era-EngA-EngB-Septin-like GTPase superfamily. EngB GTPase family. The cofactor is Mg(2+).

In terms of biological role, necessary for normal cell division and for the maintenance of normal septation. The sequence is that of Probable GTP-binding protein EngB from Symbiobacterium thermophilum (strain DSM 24528 / JCM 14929 / IAM 14863 / T).